The sequence spans 256 residues: Undecaprenyl-diphosphatase (256 aa).

7 helical membrane-spanning segments follow: residues 8-28 (VLGI…GHLI), 41-61 (FVKS…VVLY), 75-95 (IIAA…LIKG), 96-116 (FLIG…IILI), 175-195 (AEFS…YDLI), 208-228 (ILII…KWFL), and 236-256 (LKIF…FFLF).

The protein belongs to the UppP family.

It is found in the cell inner membrane. It carries out the reaction di-trans,octa-cis-undecaprenyl diphosphate + H2O = di-trans,octa-cis-undecaprenyl phosphate + phosphate + H(+). In terms of biological role, catalyzes the dephosphorylation of undecaprenyl diphosphate (UPP). Confers resistance to bacitracin. The sequence is that of Undecaprenyl-diphosphatase from Aquifex aeolicus (strain VF5).